Here is a 305-residue protein sequence, read N- to C-terminus: Fumarylacetoacetate hydrolase domain-containing protein 2 homolog (305 aa).

A divalent metal cation-binding residues include E141, E143, and D172.

This sequence belongs to the FAH family. Ca(2+) is required as a cofactor. Requires Mg(2+) as cofactor.

May have hydrolase activity. This Dictyostelium discoideum (Social amoeba) protein is Fumarylacetoacetate hydrolase domain-containing protein 2 homolog (fahd2).